Here is a 230-residue protein sequence, read N- to C-terminus: Probable methylthioribulose-1-phosphate dehydratase (230 aa).

Substrate is bound at residue cysteine 87. Histidine 105 and histidine 107 together coordinate Zn(2+). The active-site Proton donor/acceptor is glutamate 129. A Zn(2+)-binding site is contributed by histidine 185.

This sequence belongs to the aldolase class II family. MtnB subfamily. Zn(2+) is required as a cofactor.

It localises to the cytoplasm. The enzyme catalyses 5-(methylsulfanyl)-D-ribulose 1-phosphate = 5-methylsulfanyl-2,3-dioxopentyl phosphate + H2O. Its pathway is amino-acid biosynthesis; L-methionine biosynthesis via salvage pathway; L-methionine from S-methyl-5-thio-alpha-D-ribose 1-phosphate: step 2/6. In terms of biological role, catalyzes the dehydration of methylthioribulose-1-phosphate (MTRu-1-P) into 2,3-diketo-5-methylthiopentyl-1-phosphate (DK-MTP-1-P). In Drosophila virilis (Fruit fly), this protein is Probable methylthioribulose-1-phosphate dehydratase.